A 118-amino-acid polypeptide reads, in one-letter code: Large ribosomal subunit protein uL18 (118 aa).

It belongs to the universal ribosomal protein uL18 family. Part of the 50S ribosomal subunit; part of the 5S rRNA/L5/L18/L25 subcomplex. Contacts the 5S and 23S rRNAs.

Functionally, this is one of the proteins that bind and probably mediate the attachment of the 5S RNA into the large ribosomal subunit, where it forms part of the central protuberance. The sequence is that of Large ribosomal subunit protein uL18 from Dechloromonas aromatica (strain RCB).